The primary structure comprises 265 residues: MTTTAKTDDIPIDTVILDIEGTVCPITFVKDTLFPYFIEKLPSILDKFQYPLSNTSASSDDQVLNILKQLPDNITKSSESIYKHFKNLVDQDIKDPILKSLQGLIWKQGYEKNELQAPIYQDSIEFIESFPTKSSTNNKIYIYSSGSIKAQILLFGHVKSTTTTITNEVIDLNPKLNGYFDITTAGFKNQSNSYKKILQEINKSSTPKSVLFLSDNINEVNAAIEAGMKSYIVIRPGNPPIDDDDDGNDDKINHKIIYSLDELDL.

The Mg(2+) site is built by aspartate 18 and glutamate 20. Residues serine 144–serine 145 and lysine 188 each bind substrate. Aspartate 215 is a binding site for Mg(2+).

This sequence belongs to the HAD-like hydrolase superfamily. MasA/MtnC family. As to quaternary structure, monomer. Mg(2+) serves as cofactor.

It is found in the cytoplasm. The protein resides in the nucleus. The enzyme catalyses 5-methylsulfanyl-2,3-dioxopentyl phosphate + H2O = 1,2-dihydroxy-5-(methylsulfanyl)pent-1-en-3-one + phosphate. It participates in amino-acid biosynthesis; L-methionine biosynthesis via salvage pathway; L-methionine from S-methyl-5-thio-alpha-D-ribose 1-phosphate: step 3/6. The protein operates within amino-acid biosynthesis; L-methionine biosynthesis via salvage pathway; L-methionine from S-methyl-5-thio-alpha-D-ribose 1-phosphate: step 4/6. Its function is as follows. Bifunctional enzyme that catalyzes the enolization of 2,3-diketo-5-methylthiopentyl-1-phosphate (DK-MTP-1-P) into the intermediate 2-hydroxy-3-keto-5-methylthiopentenyl-1-phosphate (HK-MTPenyl-1-P), which is then dephosphorylated to form the acireductone 1,2-dihydroxy-3-keto-5-methylthiopentene (DHK-MTPene). The protein is Enolase-phosphatase E1 of Candida albicans (strain SC5314 / ATCC MYA-2876) (Yeast).